Reading from the N-terminus, the 514-residue chain is Na(+)/H(+) antiporter NhaB (514 aa).

12 helical membrane passes run Leu23–Ala43, Pro63–Ala83, Leu97–Phe117, Leu120–Phe140, Phe144–Ile164, Leu202–Pro222, Phe238–Met258, Ala303–Ile323, Leu357–Ile377, Leu391–Ile411, Ala447–Ile467, and Val475–Phe495.

This sequence belongs to the NhaB Na(+)/H(+) (TC 2.A.34) antiporter family.

It is found in the cell inner membrane. It catalyses the reaction 2 Na(+)(in) + 3 H(+)(out) = 2 Na(+)(out) + 3 H(+)(in). Na(+)/H(+) antiporter that extrudes sodium in exchange for external protons. This chain is Na(+)/H(+) antiporter NhaB, found in Salmonella choleraesuis (strain SC-B67).